The primary structure comprises 242 residues: Small ribosomal subunit protein uS2 (242 aa).

It belongs to the universal ribosomal protein uS2 family.

This is Small ribosomal subunit protein uS2 from Shewanella baltica (strain OS223).